The primary structure comprises 281 residues: NADPH-dependent 7-cyano-7-deazaguanine reductase (281 aa).

Position 87 to 89 (87 to 89 (IES)) interacts with substrate. 89–90 (SK) lines the NADPH pocket. The Thioimide intermediate role is filled by cysteine 188. Catalysis depends on aspartate 195, which acts as the Proton donor. Position 227 to 228 (227 to 228 (HE)) interacts with substrate. 256 to 257 (RG) lines the NADPH pocket.

Belongs to the GTP cyclohydrolase I family. QueF type 2 subfamily. Homodimer.

It is found in the cytoplasm. The catalysed reaction is 7-aminomethyl-7-carbaguanine + 2 NADP(+) = 7-cyano-7-deazaguanine + 2 NADPH + 3 H(+). It functions in the pathway tRNA modification; tRNA-queuosine biosynthesis. Its function is as follows. Catalyzes the NADPH-dependent reduction of 7-cyano-7-deazaguanine (preQ0) to 7-aminomethyl-7-deazaguanine (preQ1). The sequence is that of NADPH-dependent 7-cyano-7-deazaguanine reductase from Photobacterium profundum (strain SS9).